The sequence spans 857 residues: Median body protein (857 aa).

2 coiled-coil regions span residues 169–546 (HNAL…MRTE) and 571–793 (LAHL…TKAM).

It localises to the cytoplasm. The protein localises to the cytoskeleton. Functionally, structural component of the ventral disk involved in maintanance of a domed conformation of the disk required for proper attachment. May have a role in immobilizing the microtubules between cell divisions. This is Median body protein from Giardia intestinalis (strain ATCC 50803 / WB clone C6) (Giardia lamblia).